We begin with the raw amino-acid sequence, 236 residues long: Proliferating cell nuclear antigen (236 aa).

Residues 31 to 50 mediate DNA binding; sequence RCDRNISMGMNLNNMAKMLK.

It belongs to the PCNA family.

The protein localises to the nucleus. This protein is an auxiliary protein of DNA polymerase delta and is involved in the control of eukaryotic DNA replication by increasing the polymerase's processibility during elongation of the leading strand. The sequence is that of Proliferating cell nuclear antigen from Glycine max (Soybean).